The primary structure comprises 219 residues: Large ribosomal subunit protein bL25 (219 aa).

The segment at 176–219 (VTVVPPTDEPSEEEVEAMEGESATEEPEVVDEDKEDDEEENKED) is disordered. Positions 184–219 (EPSEEEVEAMEGESATEEPEVVDEDKEDDEEENKED) are enriched in acidic residues.

This sequence belongs to the bacterial ribosomal protein bL25 family. CTC subfamily. In terms of assembly, part of the 50S ribosomal subunit; part of the 5S rRNA/L5/L18/L25 subcomplex. Contacts the 5S rRNA. Binds to the 5S rRNA independently of L5 and L18.

Its function is as follows. This is one of the proteins that binds to the 5S RNA in the ribosome where it forms part of the central protuberance. This is Large ribosomal subunit protein bL25 from Staphylococcus epidermidis (strain ATCC 12228 / FDA PCI 1200).